Consider the following 214-residue polypeptide: uncharacterized protein (214 aa).

The protein belongs to the uracil-DNA glycosylase (UDG) superfamily.

This is an uncharacterized protein from Haemophilus influenzae (strain ATCC 51907 / DSM 11121 / KW20 / Rd).